The following is a 159-amino-acid chain: UPF0262 protein PHZ_c2197 (159 aa).

It belongs to the UPF0262 family.

This is UPF0262 protein PHZ_c2197 from Phenylobacterium zucineum (strain HLK1).